The sequence spans 236 residues: Aminopyrimidine aminohydrolase (236 aa).

Residue D44 participates in substrate binding. C135 acts as the Nucleophile in catalysis. Substrate-binding residues include Y139 and Y163. Catalysis depends on E205, which acts as the Proton donor.

Belongs to the TenA family. As to quaternary structure, homotetramer.

The catalysed reaction is 4-amino-5-aminomethyl-2-methylpyrimidine + H2O = 4-amino-5-hydroxymethyl-2-methylpyrimidine + NH4(+). The enzyme catalyses thiamine + H2O = 5-(2-hydroxyethyl)-4-methylthiazole + 4-amino-5-hydroxymethyl-2-methylpyrimidine + H(+). It functions in the pathway cofactor biosynthesis; thiamine diphosphate biosynthesis. Functionally, catalyzes an amino-pyrimidine hydrolysis reaction at the C5' of the pyrimidine moiety of thiamine compounds, a reaction that is part of a thiamine salvage pathway. Thus, catalyzes the conversion of 4-amino-5-aminomethyl-2-methylpyrimidine to 4-amino-5-hydroxymethyl-2-methylpyrimidine (HMP). To a lesser extent, is also able to catalyze the hydrolytic cleavage of thiamine; however, this thiaminase activity is unlikely to be physiologically relevant. Therefore, is involved in the regeneration of the thiamine pyrimidine from thiamine degraded products present in the environment, rather than in thiamine degradation. The protein is Aminopyrimidine aminohydrolase of Bacillus subtilis (strain 168).